Consider the following 461-residue polypeptide: Steroidogenic factor 1 (461 aa).

Residues 10–85 constitute a DNA-binding region (nuclear receptor); sequence DELCPVCGDK…VGMRLEAVRA (76 aa). The NR C4-type zinc-finger motif lies at 13 to 33; that stretch reads CPVCGDKVSGYHYGLLTCESC. 3 positions are modified to N6-acetyllysine: lysine 34, lysine 38, and lysine 72. An NR C4-type zinc finger spans residues 49–73; sequence CTESQSCKIDKTQRKRCPFCRFQKC. Lysine 119 participates in a covalent cross-link: Glycyl lysine isopeptide (Lys-Gly) (interchain with G-Cter in SUMO). The segment at 119 to 157 is disordered; it reads KLETGPPMGVPPPPPPAPDYVLPPSLHGPEPKGLAAGPP. Pro residues predominate over residues 126–136; the sequence is MGVPPPPPPAP. Residue lysine 194 forms a Glycyl lysine isopeptide (Lys-Gly) (interchain with G-Cter in SUMO) linkage. The residue at position 203 (serine 203) is a Phosphoserine; by CDK7. The region spanning 222 to 459 is the NR LBD domain; that stretch reads NVPELILQLL…NLLIEMLQAK (238 aa). The segment at 230–461 is important for dimerization; that stretch reads LLQLEPDEDQ…LIEMLQAKQT (232 aa). Glycine 341, tyrosine 436, and lysine 440 together coordinate a 1,2-diacyl-sn-glycero-3-phosphocholine. Residues glycine 341, tyrosine 436, and lysine 440 each contribute to the a 1,2-diacylglycero-3-phosphoethanolamine site.

Belongs to the nuclear hormone receptor family. NR5 subfamily. Binds DNA as a monomer. Interacts with NR0B2 and PPARGC1A. Part of a complex consisting of SFPQ, NONO and NR5A1. Interacts with NCOA2. Interacts with DGKQ and CDK7. Binds to and activated by HIPK3. Acetylation stimulates the transcriptional activity. In terms of processing, sumoylation reduces CDK7-mediated phosphorylation on Ser-203. Post-translationally, phosphorylated on Ser-203 by CDK7. This phosphorylation promotes transcriptional activity. As to expression, high expressed in the adrenal cortex, the ovary, the testis, and the spleen.

The protein resides in the nucleus. Transcriptional activator. Essential for sexual differentiation and formation of the primary steroidogenic tissues. Binds to the Ad4 site found in the promoter region of steroidogenic P450 genes such as CYP11A, CYP11B and CYP21B. Also regulates the AMH/Muellerian inhibiting substance gene as well as the AHCH and STAR genes. 5'-YCAAGGYC-3' and 5'-RRAGGTCA-3' are the consensus sequences for the recognition by NR5A1. The SFPQ-NONO-NR5A1 complex binds to the CYP17 promoter and regulates basal and cAMP-dependent transcriptional activity. Binds phosphatidylcholine. Binds phospholipids with a phosphatidylinositol (PI) headgroup, in particular PI(3,4)P2 and PI(3,4,5)P3. Activated by the phosphorylation of NR5A1 by HIPK3 leading to increased steroidogenic gene expression upon cAMP signaling pathway stimulation. In Homo sapiens (Human), this protein is Steroidogenic factor 1 (NR5A1).